We begin with the raw amino-acid sequence, 155 residues long: Small ribosomal subunit protein bS6 (155 aa).

The interval 94 to 155 is disordered; it reads EKHEEGPSAM…RPRRPREDRV (62 aa).

It belongs to the bacterial ribosomal protein bS6 family.

In terms of biological role, binds together with bS18 to 16S ribosomal RNA. The chain is Small ribosomal subunit protein bS6 from Rhizobium leguminosarum bv. trifolii (strain WSM2304).